The sequence spans 253 residues: Trans-aconitate 2-methyltransferase (253 aa).

Belongs to the methyltransferase superfamily. Tam family.

The protein localises to the cytoplasm. It carries out the reaction trans-aconitate + S-adenosyl-L-methionine = (E)-3-(methoxycarbonyl)pent-2-enedioate + S-adenosyl-L-homocysteine. Catalyzes the S-adenosylmethionine monomethyl esterification of trans-aconitate. This Azoarcus sp. (strain BH72) protein is Trans-aconitate 2-methyltransferase.